The primary structure comprises 287 residues: ATP synthase gamma chain (287 aa).

The protein belongs to the ATPase gamma chain family. In terms of assembly, F-type ATPases have 2 components, CF(1) - the catalytic core - and CF(0) - the membrane proton channel. CF(1) has five subunits: alpha(3), beta(3), gamma(1), delta(1), epsilon(1). CF(0) has three main subunits: a, b and c.

The protein resides in the cell membrane. Produces ATP from ADP in the presence of a proton gradient across the membrane. The gamma chain is believed to be important in regulating ATPase activity and the flow of protons through the CF(0) complex. This chain is ATP synthase gamma chain, found in Staphylococcus carnosus (strain TM300).